Consider the following 576-residue polypeptide: MAGUK p55 subfamily member 7 (576 aa).

2 L27 domains span residues 10-63 (SDTG…YEKE) and 65-122 (PMPV…YDPV). The 82-residue stretch at 139–220 (IIRLVKNREP…AITFKIIPSI (82 aa)) folds into the PDZ domain. The SH3 domain occupies 228–298 (DGKMFVKALF…PSKQFQERRF (71 aa)). The 193-residue stretch at 368–560 (YRLVILVGPV…AYNELRSTLE (193 aa)) folds into the Guanylate kinase-like domain.

It belongs to the MAGUK family.

Its subcellular location is the membrane. It localises to the cell junction. The protein resides in the tight junction. It is found in the adherens junction. In terms of biological role, acts as an important adapter that promotes epithelial cell polarity and tight junction formation. Involved in the assembly of protein complexes at sites of cell-cell contact. The chain is MAGUK p55 subfamily member 7 (mpp7) from Xenopus tropicalis (Western clawed frog).